A 132-amino-acid chain; its full sequence is Mercuric resistance operon regulatory protein (132 aa).

Residues 2-71 (KFRIGELADK…LNEIDKLLGV (70 aa)) enclose the HTH merR-type domain. Positions 5–24 (IGELADKCGVNKETIRYYER) form a DNA-binding region, H-T-H motif. The Hg(2+) site is built by Cys79, Cys114, and Cys123.

Homodimer.

Mediates the mercuric-dependent induction of mercury resistance operon. In the absence of mercury MerR represses transcription by binding tightly to the mer operator region; when mercury is present the dimeric complex binds a single ion and becomes a potent transcriptional activator, while remaining bound to the mer site. In Bacillus cereus, this protein is Mercuric resistance operon regulatory protein (merR1).